The primary structure comprises 348 residues: Large ribosomal subunit protein uL10 (348 aa).

Residues 291-348 (LPEELRGVSAADTGAAEEEESTDEEAADADQADAAEDDDAADDDGDDEDAGDALGSLF) form a disordered region. The segment covering 305-341 (AAEEEESTDEEAADADQADAAEDDDAADDDGDDEDAG) has biased composition (acidic residues).

This sequence belongs to the universal ribosomal protein uL10 family. As to quaternary structure, part of the 50S ribosomal subunit. Forms part of the ribosomal stalk which helps the ribosome interact with GTP-bound translation factors. Forms a heptameric L10(L12)2(L12)2(L12)2 complex, where L10 forms an elongated spine to which the L12 dimers bind in a sequential fashion.

In terms of biological role, forms part of the ribosomal stalk, playing a central role in the interaction of the ribosome with GTP-bound translation factors. The sequence is that of Large ribosomal subunit protein uL10 from Haloferax volcanii (strain ATCC 29605 / DSM 3757 / JCM 8879 / NBRC 14742 / NCIMB 2012 / VKM B-1768 / DS2) (Halobacterium volcanii).